The sequence spans 83 residues: FMRFamide-like neuropeptide 23 (83 aa).

Positions 1 to 24 (MLLPKISILLYILVVLQETAAVRG) are cleaved as a signal peptide. A propeptide spanning residues 25-36 (ALFRSGRAVPFE) is cleaved from the precursor. A Phenylalanine amide modification is found at Phe47. Residues 50–83 (AGMASGVGGGSEGGPDDVKNSYIRVNGEPEIVYQ) constitute a propeptide that is removed on maturation.

It belongs to the FARP (FMRFamide related peptide) family. Each flp gene is expressed in a distinct set of neurons.

The protein localises to the secreted. In terms of biological role, FMRFamides and FMRFamide-like peptides are neuropeptides. This chain is FMRFamide-like neuropeptide 23 (flp-23), found in Caenorhabditis elegans.